We begin with the raw amino-acid sequence, 663 residues long: Rho GTPase-activating protein 18 (663 aa).

2 disordered regions span residues 14–73 (AYHP…DESM) and 85–106 (RSNE…DEGE). Residues 27–37 (SHVKGGDEATS) are compositionally biased toward basic and acidic residues. The segment covering 38–51 (SRRYGQYTINQEGS) has biased composition (polar residues). S65 and S68 each carry phosphoserine. Over residues 85-102 (RSNENRQEGQEAIVVKEP) the composition is skewed to basic and acidic residues. T156 is subject to Phosphothreonine. Disordered stretches follow at residues 173–228 (FAQQ…PASE) and 245–277 (KEFS…TRIG). Basic and acidic residues-rich tracts occupy residues 178–205 (EAQE…KDDQ) and 212–222 (DSKEQISRVPE). A phosphoserine mark is found at S260 and S263. Residues 324-523 (IPLTILLEQD…LLIRYQKILW (200 aa)) form the Rho-GAP domain. S610 carries the post-translational modification Phosphoserine.

Interacts with MPHOSPH6. In terms of tissue distribution, widely expressed: expressed in most organs, except small intestine.

The protein localises to the cytoplasm. Its function is as follows. Rho GTPase activating protein that suppresses F-actin polymerization by inhibiting Rho. Rho GTPase activating proteins act by converting Rho-type GTPases to an inactive GDP-bound state. Plays a key role in tissue tension and 3D tissue shape by regulating cortical actomyosin network formation. Acts downstream of YAP1 and inhibits actin polymerization, which in turn reduces nuclear localization of YAP1. Regulates cell shape, spreading, and migration. This is Rho GTPase-activating protein 18 from Mus musculus (Mouse).